Consider the following 144-residue polypeptide: Large ribosomal subunit protein uL13 (144 aa).

This sequence belongs to the universal ribosomal protein uL13 family. In terms of assembly, part of the 50S ribosomal subunit.

Its function is as follows. This protein is one of the early assembly proteins of the 50S ribosomal subunit, although it is not seen to bind rRNA by itself. It is important during the early stages of 50S assembly. This chain is Large ribosomal subunit protein uL13, found in Nitratidesulfovibrio vulgaris (strain DSM 19637 / Miyazaki F) (Desulfovibrio vulgaris).